Consider the following 98-residue polypeptide: NADH-ubiquinone oxidoreductase chain 4L (98 aa).

3 helical membrane-spanning segments follow: residues M1–V21, L26–L46, and I61–I81.

This sequence belongs to the complex I subunit 4L family. As to quaternary structure, core subunit of respiratory chain NADH dehydrogenase (Complex I) which is composed of 45 different subunits.

The protein resides in the mitochondrion inner membrane. It carries out the reaction a ubiquinone + NADH + 5 H(+)(in) = a ubiquinol + NAD(+) + 4 H(+)(out). Functionally, core subunit of the mitochondrial membrane respiratory chain NADH dehydrogenase (Complex I) which catalyzes electron transfer from NADH through the respiratory chain, using ubiquinone as an electron acceptor. Part of the enzyme membrane arm which is embedded in the lipid bilayer and involved in proton translocation. The polypeptide is NADH-ubiquinone oxidoreductase chain 4L (MT-ND4L) (Chlorocebus aethiops (Green monkey)).